Here is a 715-residue protein sequence, read N- to C-terminus: Metastasis-associated protein MTA1 (715 aa).

The BAH domain occupies 1–164; the sequence is MAANMYRVGD…PQQKTLLADK (164 aa). The region spanning 165–276 is the ELM2 domain; the sequence is GEIRVGNRYQ…KAISALVPQG (112 aa). Lys182 participates in a covalent cross-link: Glycyl lysine isopeptide (Lys-Gly) (interchain with G-Cter in ubiquitin). The region spanning 283-335 is the SANT domain; it reads DEMEEWSASEANLFEEALEKYGKDFTDIQQDFLPWKSLTSIIEYYYMWKTTDR. Phosphoserine is present on Ser386. A GATA-type; atypical zinc finger spans residues 393–420; sequence CESCYTTQSYQWYSWGPPNMQCRLCASC. Residues 435–460 form a disordered region; sequence RLDGERPGPNRSNMSPHGLPARSSGS. Residues Ser446 and Ser449 each carry the phosphoserine modification. Lys509 is covalently cross-linked (Glycyl lysine isopeptide (Lys-Gly) (interchain with G-Cter in SUMO2 and SUMO3)). Ser522 carries the phosphoserine modification. Residues 545-552 carry the SH3-binding motif; it reads PRPPKPDP. Lys549 is covalently cross-linked (Glycyl lysine isopeptide (Lys-Gly) (interchain with G-Cter in SUMO2)). Thr564 carries the phosphothreonine modification. Ser576 is modified (phosphoserine). Phosphothreonine is present on Thr578. At Lys626 the chain carries N6-acetyllysine; alternate. Lys626 participates in a covalent cross-link: Glycyl lysine isopeptide (Lys-Gly) (interchain with G-Cter in ubiquitin); alternate. The residue at position 639 (Ser639) is a Phosphoserine. The interaction with RBBP4 stretch occupies residues 656 to 686; that stretch reads DVFYMATEETRKIRKLLSSSETKRAARRPYK. The interval 673–715 is disordered; the sequence is SSSETKRAARRPYKPIALRQSQALPPRPPPPAPVNDEPIVIED. The SH3-binding motif lies at 696 to 705; it reads LPPRPPPPAP. The SUMO interaction motif 1 (SIM); crucial for efficient sumoylation signature appears at 711-715; that stretch reads IVIED.

The protein belongs to the metastasis-associated protein family. Component of the nucleosome remodeling and deacetylase (NuRD) repressor complex, composed of core proteins MTA1, MTA2, MTA3, RBBP4, RBBP7, HDAC1, HDAC2, MBD2, MBD3, and peripherally associated proteins CDK2AP1, CDK2AP2, GATAD2A, GATAD2B, CHD3, CHD4 and CHD5. The exact stoichiometry of the NuRD complex is unknown, and some subunits such as MBD2 and MBD3, GATAD2A and GATAD2B, and CHD3, CHD4 and CHD5 define mutually exclusive NuRD complexes. Interacts with RBBP4; the interaction is direct. Interacts with BMAL1. Interacts with CLOCK. Interacts with COP1. Interacts with CSNK1G2 in the cytoplasm. Interacts with EP300. Interacts with HDAC2. Interacts with IFI16. Interacts with ITGB3BP/CENPR. Interacts with MBD3L2. Interacts with MDM2. Interacts with NACC2. Interacts with p53/TP53. Interacts with PIAS1. Interacts with PIAS3. Interacts with PIAS4. Interacts with PWWP2A. Interacts with PWWP2B. Interacts with SENP1. Interacts with SENP2. Interacts with SIX3; facilitates the binding of SIX3 to the core DNA motif of SIX3 promoter. Interacts with SUMO1. Interacts with SUMO2. Interacts with TFCP2L1; which is indispensable for TFCP2L1-mediated self-renewal-promoting effect and endoderm-inhibiting action. Interacts with TFAP2C. Interacts with TPR. Interacts with UBE2I/UBC9. Phosphorylation by CSNK1G2/CK1 triggered by estrogen enhances corepression of estrogen receptor (ER). In terms of processing, acetylation is essential for its transcriptional coactivator activity. Post-translationally, sumoylation positively regulates its transcriptional corepressor activity but does not affect the protein stability. Sumoylated preferentially by SUMO2 or SUMO3 than SUMO1. Sumoylation is enhanced by PIAS1/3/4 and preferentially sumoylated by SUMO2 in the presence of PIAS1/3/4. Desumoylated by SENP1. Ubiquitinated by COP1, which leads to proteasomal degradation. As to expression, widely expressed. High expression in brain, liver, kidney, and cardiac muscle, ovaries, adrenal glands and virgin mammary glands. Higher in tumors than in adjacent normal tissue from the same individual. Up-regulated in a wide variety of cancers including breast, liver, ovarian, and colorectal cancer and its expression levels are closely correlated with tumor aggressiveness and metastasis.

Its subcellular location is the nucleus. It is found in the cytoplasm. It localises to the nucleus envelope. The protein resides in the cytoskeleton. Functionally, transcriptional coregulator which can act as both a transcriptional corepressor and coactivator. Acts as a component of the histone deacetylase NuRD complex which participates in the remodeling of chromatin. In the NuRD complex, regulates transcription of its targets by modifying the acetylation status of the target chromatin and cofactor accessibility to the target DNA. In conjunction with other components of NuRD, acts as a transcriptional corepressor of BRCA1, ESR1, TFF1 and CDKN1A. Acts as a transcriptional coactivator of BCAS3, and SUMO2, independent of the NuRD complex. Stimulates the expression of WNT1 by inhibiting the expression of its transcriptional corepressor SIX3. Regulates p53-dependent and -independent DNA repair processes following genotoxic stress. Regulates the stability and function of p53/TP53 by inhibiting its ubiquitination by COP1 and MDM2 thereby regulating the p53-dependent DNA repair. Plays a role in the regulation of the circadian clock and is essential for the generation and maintenance of circadian rhythms under constant light and for normal entrainment of behavior to light-dark (LD) cycles. Positively regulates the CLOCK-BMAL1 heterodimer mediated transcriptional activation of its own transcription and the transcription of CRY1. Regulates deacetylation of BMAL1 by regulating SIRT1 expression, resulting in derepressing CRY1-mediated transcription repression. With TFCP2L1, promotes establishment and maintenance of pluripotency in embryonic stem cells (ESCs) and inhibits endoderm differentiation. Its function is as follows. Binds to ESR1 and sequesters it in the cytoplasm and enhances its non-genomic responses. In Homo sapiens (Human), this protein is Metastasis-associated protein MTA1 (MTA1).